The sequence spans 521 residues: GMP synthase [glutamine-hydrolyzing] (521 aa).

The Glutamine amidotransferase type-1 domain occupies 5 to 197 (KILILDFGSQ…VLDICGAQPG (193 aa)). Catalysis depends on Cys81, which acts as the Nucleophile. Residues His171 and Glu173 contribute to the active site. A GMPS ATP-PPase domain is found at 198–390 (WTMPNYIEEA…LGLPREMVYR (193 aa)). An ATP-binding site is contributed by 225-231 (SGGVDSS).

Homodimer.

The catalysed reaction is XMP + L-glutamine + ATP + H2O = GMP + L-glutamate + AMP + diphosphate + 2 H(+). The protein operates within purine metabolism; GMP biosynthesis; GMP from XMP (L-Gln route): step 1/1. Its function is as follows. Catalyzes the synthesis of GMP from XMP. In Neisseria gonorrhoeae (strain ATCC 700825 / FA 1090), this protein is GMP synthase [glutamine-hydrolyzing].